An 89-amino-acid polypeptide reads, in one-letter code: Small ribosomal subunit protein uS15 (89 aa).

Residues 1–21 show a composition bias toward basic and acidic residues; sequence MAISQERKNEIIKEYARHEGD. The segment at 1-24 is disordered; it reads MAISQERKNEIIKEYARHEGDTGS.

It belongs to the universal ribosomal protein uS15 family. As to quaternary structure, part of the 30S ribosomal subunit. Forms a bridge to the 50S subunit in the 70S ribosome, contacting the 23S rRNA.

Functionally, one of the primary rRNA binding proteins, it binds directly to 16S rRNA where it helps nucleate assembly of the platform of the 30S subunit by binding and bridging several RNA helices of the 16S rRNA. Its function is as follows. Forms an intersubunit bridge (bridge B4) with the 23S rRNA of the 50S subunit in the ribosome. This Enterococcus faecalis (strain ATCC 700802 / V583) protein is Small ribosomal subunit protein uS15.